The following is a 398-amino-acid chain: GTP cyclohydrolase-2 (398 aa).

The tract at residues 1–172 (MNTPTHTHPH…TAAACASTTE (172 aa)) is unknown. Residues 173 to 398 (YELVTRTPVP…VKPIAKTGHA (226 aa)) are GTP cyclohydrolase II. 220–224 (RVHSS) serves as a coordination point for GTP. Zn(2+) contacts are provided by cysteine 225, cysteine 236, and cysteine 238. GTP contacts are provided by residues glutamine 241, 263–265 (EGR), and threonine 285. Aspartate 297 serves as the catalytic Proton acceptor. Arginine 299 acts as the Nucleophile in catalysis. 2 residues coordinate GTP: serine 320 and lysine 325. The disordered stretch occupies residues 375 to 398 (QRPQDPSETVDGETVKPIAKTGHA).

The protein in the C-terminal section; belongs to the GTP cyclohydrolase II family. It depends on Zn(2+) as a cofactor.

It carries out the reaction GTP + 4 H2O = 2,5-diamino-6-hydroxy-4-(5-phosphoribosylamino)-pyrimidine + formate + 2 phosphate + 3 H(+). The protein operates within cofactor biosynthesis; riboflavin biosynthesis; 5-amino-6-(D-ribitylamino)uracil from GTP: step 1/4. Catalyzes the conversion of GTP to 2,5-diamino-6-ribosylamino-4(3H)-pyrimidinone 5'-phosphate (DARP), formate and pyrophosphate. The chain is GTP cyclohydrolase-2 (ribA) from Xylella fastidiosa (strain Temecula1 / ATCC 700964).